A 1771-amino-acid polypeptide reads, in one-letter code: Atrochrysone carboxylic acid synthase (1771 aa).

The segment at 38-269 is N-terminal acylcarrier protein transacylase domain (SAT); it reads HLHSKDRRHH…SLPVFGGLCH (232 aa). Positions 402–836 constitute a Ketosynthase family 3 (KS3) domain; that stretch reads QSKIAIVGMS…GGNTSVVLEE (435 aa). Residues Cys-575, His-711, and His-754 each act as for beta-ketoacyl synthase activity in the active site. The interval 937–1257 is malonyl-CoA:ACP transacylase (MAT) domain; that stretch reads FAFTGQGASY…LSSLHCAGVE (321 aa). Positions 1322–1641 are product template (PT) domain; sequence TSTVQKIVEE…RLLLNRFFSP (320 aa). Positions 1326–1461 are N-terminal hotdog fold; sequence QKIVEESFDG…AKIYYCDASE (136 aa). The PKS/mFAS DH domain occupies 1326-1636; it reads QKIVEESFDG…FRRYPRLLLN (311 aa). Residue His-1358 is the Proton acceptor; for dehydratase activity of the active site. The C-terminal hotdog fold stretch occupies residues 1488 to 1636; sequence IANRFSGRMA…FRRYPRLLLN (149 aa). The active-site Proton donor; for dehydratase activity is Asp-1547. Residues 1668-1681 show a composition bias toward low complexity; it reads AATSTTSTTSTAST. The tract at residues 1668 to 1695 is disordered; sequence AATSTTSTTSTASTGQPPKVDETSPVDS. The region spanning 1693-1770 is the Carrier domain; that stretch reads VDSNSTAARA…DLKSWLLEYY (78 aa). An O-(pantetheine 4'-phosphoryl)serine modification is found at Ser-1730.

The catalysed reaction is holo-[ACP] + 8 malonyl-CoA + 8 H(+) = atrochrysone carboxyl-[ACP] + 8 CO2 + 8 CoA + 2 H2O. It functions in the pathway secondary metabolite biosynthesis. In terms of biological role, non-reducing polyketide synthase; part of the gene cluster that mediates the biosynthesis of geodin, an intermediate in the biosynthesis of other natural products. The pathway begins with the synthesis of atrochrysone thioester by the polyketide synthase (PKS) gedC. The atrochrysone carboxyl ACP thioesterase gedB then breaks the thioester bond and releases the atrochrysone carboxylic acid from gedC. The atrochrysone carboxylic acid is then converted to atrochrysone which is further transformed into emodinanthrone. The next step is performed by the emodinanthrone oxygenase gedH that catalyzes the oxidation of emodinanthrone to emodin. Emodin O-methyltransferase encoded probably by gedA then catalyzes methylation of the 8-hydroxy group of emodin to form questin. Ring cleavage of questin by questin oxidase gedK leads to desmethylsulochrin via several intermediates including questin epoxide. Another methylation step probably catalyzed by methyltransferase gedG leads to the formation of sulochrin which is further converted to dihydrogeodin by the sulochrin halogenase gedL. Finally, the dihydrogeodin oxidase gedJ catalyzes the stereospecific phenol oxidative coupling reaction converting dihydrogeodin to geodin. This chain is Atrochrysone carboxylic acid synthase, found in Aspergillus terreus (strain NIH 2624 / FGSC A1156).